The chain runs to 544 residues: Putative ankyrin repeat protein L289 (544 aa).

ANK repeat units lie at residues 31–71, 72–105, 110–143, 147–181, 185–218, 222–255, 259–297, 300–339, 340–374, 378–413, and 414–447; these read KNFS…AQNE, HGWTALMIASILSNDWSSIKTVKLLLKKGADPNI, YSQTVLKLAASNVKYASNIKTIKLLIHYGADINH, LGVSVLHYCYIDYYTKSDNLEVIKLLLSYGMDINS, QGNTLLYIVSKVSQNNNSTETVKFLLENNADPNI, KGTTALMVASKYSNSTSNLATVKLLLDYEANINF, YNETALSKVVSNFYESNYNKNNFMTLKFLIQKGAIDIPI, DKLSILMVAVIRTYCSENSDNFTKLIELLLKHFNPNIQCS, NGKTVLHYLCNKQVCNFPYVDVINLLLKAGINPNI, QGKTALILACDNYCFLKNKEAVRLLCKVSTINTIDN, and TGQSALDYFLNKYKEKYTNILTIILKYGAYCVNK.

The chain is Putative ankyrin repeat protein L289 from Acanthamoeba polyphaga mimivirus (APMV).